The chain runs to 198 residues: Peptidyl-tRNA hydrolase (198 aa).

TRNA is bound at residue tyrosine 15. Catalysis depends on histidine 20, which acts as the Proton acceptor. TRNA is bound by residues phenylalanine 66, asparagine 68, and asparagine 114.

This sequence belongs to the PTH family. In terms of assembly, monomer.

It localises to the cytoplasm. The enzyme catalyses an N-acyl-L-alpha-aminoacyl-tRNA + H2O = an N-acyl-L-amino acid + a tRNA + H(+). In terms of biological role, hydrolyzes ribosome-free peptidyl-tRNAs (with 1 or more amino acids incorporated), which drop off the ribosome during protein synthesis, or as a result of ribosome stalling. Catalyzes the release of premature peptidyl moieties from peptidyl-tRNA molecules trapped in stalled 50S ribosomal subunits, and thus maintains levels of free tRNAs and 50S ribosomes. The protein is Peptidyl-tRNA hydrolase of Cupriavidus necator (strain ATCC 17699 / DSM 428 / KCTC 22496 / NCIMB 10442 / H16 / Stanier 337) (Ralstonia eutropha).